Consider the following 482-residue polypeptide: QWRF motif-containing protein 3 (482 aa).

Residues 1–20 (MKSCEHELLKTRRGKSREVS) show a composition bias toward basic and acidic residues. 2 disordered regions span residues 1 to 60 (MKSC…GLKK) and 171 to 220 (TAKP…QWAL). Over residues 21 to 42 (SRFLSSPSASSSPNRRNSTSNS) the composition is skewed to low complexity. The segment covering 191-219 (RTNSSKGIENRLQRNNSVSRYGSSMSQWA) has biased composition (polar residues). Residues 292 to 295 (QWRF) carry the QWRF motif motif.

It belongs to the QWRF family.

This Arabidopsis thaliana (Mouse-ear cress) protein is QWRF motif-containing protein 3 (QWRF3).